A 391-amino-acid chain; its full sequence is F-box/kelch-repeat protein At4g05080 (391 aa).

An F-box domain is found at 2–49 (TMMFDLTQDLVKEILSRVPITSLGAVRSTCKGWNALSKDRILCKAKPK). Kelch repeat units follow at residues 100–143 (HMYY…TFCL) and 144–194 (RYDN…SASV). Residues 369–385 (RRRRERNSKRKEKKRKG) show a composition bias toward basic residues. Residues 369-391 (RRRRERNSKRKEKKRKGTTNNKV) form a disordered region.

The protein is F-box/kelch-repeat protein At4g05080 of Arabidopsis thaliana (Mouse-ear cress).